Here is a 404-residue protein sequence, read N- to C-terminus: L-cysteine:1D-myo-inositol 2-amino-2-deoxy-alpha-D-glucopyranoside ligase 1 (404 aa).

Residue Cys47 participates in Zn(2+) binding. L-cysteinyl-5'-AMP is bound by residues 47-50 (CGIT), Thr62, and 85-87 (NIT). The short motif at 49–59 (ITPYDSTHLGH) is the 'HIGH' region element. Residues 188 to 193 (ERGGDP) carry the 'ERGGDP' region motif. Residue Trp228 coordinates L-cysteinyl-5'-AMP. Cys232 contacts Zn(2+). 250 to 252 (GSD) lines the L-cysteinyl-5'-AMP pocket. His257 contacts Zn(2+). L-cysteinyl-5'-AMP is bound at residue Ile284. The short motif at 290 to 294 (KMSKS) is the 'KMSKS' region element.

This sequence belongs to the class-I aminoacyl-tRNA synthetase family. MshC subfamily. Monomer. The cofactor is Zn(2+).

The enzyme catalyses 1D-myo-inositol 2-amino-2-deoxy-alpha-D-glucopyranoside + L-cysteine + ATP = 1D-myo-inositol 2-(L-cysteinylamino)-2-deoxy-alpha-D-glucopyranoside + AMP + diphosphate + H(+). Functionally, catalyzes the ATP-dependent condensation of GlcN-Ins and L-cysteine to form L-Cys-GlcN-Ins. The protein is L-cysteine:1D-myo-inositol 2-amino-2-deoxy-alpha-D-glucopyranoside ligase 1 of Corynebacterium urealyticum (strain ATCC 43042 / DSM 7109).